Consider the following 298-residue polypeptide: Chromatin modification-related protein YNG2 (298 aa).

Positions 20–86 (EVRHLLEEIK…KLVQKLQKEK (67 aa)) form a coiled coil. Polar residues predominate over residues 140 to 158 (GFSDSASATPTPRNGSSAT). A disordered region spans residues 140 to 206 (GFSDSASATP…EEIEDPLPYE (67 aa)). Residues 174 to 188 (VKGASSSSAQSSSAS) show a composition bias toward low complexity. The segment at 237–288 (NLYCFCQRVSFGEMIGCDNEDCKYEWFHWSCVGITSPPKDDEIWYCPDCASK) adopts a PHD-type zinc-finger fold. Residues cysteine 240, cysteine 242, cysteine 253, cysteine 258, histidine 264, cysteine 267, cysteine 282, and cysteine 285 each coordinate Zn(2+).

Belongs to the ING family. In terms of assembly, interacts with H3K4me3 and to a lesser extent with H3K4me2. Component of the NuA4 histone acetyltransferase complex.

It localises to the nucleus. Functionally, component of the NuA4 histone acetyltransferase complex which is involved in transcriptional activation of selected genes principally by acetylation of nucleosomal histone H4 and H2A. The NuA4 complex is also involved in DNA repair. Involved in cell cycle progression and meiosis. The protein is Chromatin modification-related protein YNG2 (YNG2) of Candida albicans (strain SC5314 / ATCC MYA-2876) (Yeast).